The chain runs to 89 residues: Small ribosomal subunit protein bS20 (89 aa).

Basic residues predominate over residues 1-12; it reads MANIKSAKKRAK. Residues 1–24 form a disordered region; that stretch reads MANIKSAKKRAKQTVVRNERNTGQ.

The protein belongs to the bacterial ribosomal protein bS20 family.

Functionally, binds directly to 16S ribosomal RNA. In Xanthomonas campestris pv. campestris (strain 8004), this protein is Small ribosomal subunit protein bS20.